The sequence spans 232 residues: Ubiquinone biosynthesis O-methyltransferase (232 aa).

Residues R36, G55, D76, and L120 each coordinate S-adenosyl-L-methionine.

The protein belongs to the methyltransferase superfamily. UbiG/COQ3 family.

It catalyses the reaction a 3-demethylubiquinol + S-adenosyl-L-methionine = a ubiquinol + S-adenosyl-L-homocysteine + H(+). The enzyme catalyses a 3-(all-trans-polyprenyl)benzene-1,2-diol + S-adenosyl-L-methionine = a 2-methoxy-6-(all-trans-polyprenyl)phenol + S-adenosyl-L-homocysteine + H(+). It functions in the pathway cofactor biosynthesis; ubiquinone biosynthesis. Functionally, O-methyltransferase that catalyzes the 2 O-methylation steps in the ubiquinone biosynthetic pathway. This Pseudomonas entomophila (strain L48) protein is Ubiquinone biosynthesis O-methyltransferase.